Reading from the N-terminus, the 636-residue chain is Chaperone protein DnaK (636 aa).

Thr-198 carries the phosphothreonine; by autocatalysis modification. A disordered region spans residues 602-636 (QAEGAQPGGEAAGEASAKDEKVVDADFEEVKDDKK). Positions 626–636 (ADFEEVKDDKK) are enriched in acidic residues.

This sequence belongs to the heat shock protein 70 family.

Acts as a chaperone. This chain is Chaperone protein DnaK, found in Geobacter sulfurreducens (strain ATCC 51573 / DSM 12127 / PCA).